Reading from the N-terminus, the 699-residue chain is Receptor-type tyrosine-protein phosphatase epsilon (699 aa).

Positions 1–19 (MEPFCPLLLASFSLSLARA) are cleaved as a signal peptide. Low complexity predominate over residues 20-36 (GQGNDTTPTESNWTSTT). The segment at 20–40 (GQGNDTTPTESNWTSTTAGPP) is disordered. Residues 20–45 (GQGNDTTPTESNWTSTTAGPPDPGAS) are Extracellular-facing. N-linked (GlcNAc...) asparagine glycosylation is found at Asn23 and Asn31. Residues 46–68 (QPLLTWLLLPLLLLLFLLAAYFF) form a helical membrane-spanning segment. At 69–699 (RFRKQRKAVV…DIFSDYANFK (631 aa)) the chain is on the cytoplasmic side. 2 consecutive Tyrosine-protein phosphatase domains span residues 134-393 (FREE…LLEY) and 425-688 (LEEE…VQDF). Substrate-binding positions include Asp302, 334–340 (CSAGVGR), and Gln378. The active-site Phosphocysteine intermediate is the Cys334. The Phosphocysteine intermediate role is filled by Cys629. Phosphotyrosine is present on Tyr695.

This sequence belongs to the protein-tyrosine phosphatase family. Receptor class 4 subfamily. As to quaternary structure, monomer. Isoform 2: Homodimer. Can form oligomers. Dimerization is increased by oxidative stress and decreased by EGFR. Isoform 2 interacts with GRB2. A catalytically active cytoplasmic form (p65) is produced by proteolytic cleavage of either isoform 1, isoform 2 or isoform 3. Post-translationally, phosphorylated on tyrosine residues by tyrosine kinase Neu. In terms of processing, glycosylated. Isoform 2 is expressed in the spleen and thymus (at protein level). Detected in fibroblasts, myeloid cells, macrophages, and T-cells but not in B-cell lines. Isoform 1 and isoform 2 are expressed predominantly in the brain, testes, and lungs, with lower levels present in lymph nodes, thymus, spleen, heart and mammary glands. Isoform 1 is expressed in osteoclasts and not in osteoblasts and its expression is related to osteoclast differentiation. It is also expressed in the erythrocytes. Isoform 2 is strongly expressed in skeletal muscle and L6 skeletal muscle cell line.

Its subcellular location is the cell membrane. It is found in the cytoplasm. The catalysed reaction is O-phospho-L-tyrosyl-[protein] + H2O = L-tyrosyl-[protein] + phosphate. Its activity is regulated as follows. Inhibited by alendronate (ALN), orthovanadate, and phenylarsine oxide (PAO). In terms of biological role, acts as a negative regulator of insulin receptor (IR) signaling and is involved in insulin-induced glucose metabolism mainly through direct dephosphorylation and inactivation of IR in hepatocytes and liver. Plays a critical role in signaling transduction pathways and phosphoprotein network topology in red blood cells. May play a role in osteoclast formation and function. Its function is as follows. Acts as a negative regulator of insulin receptor (IR) signaling in skeletal muscle. Regulates insulin-induced tyrosine phosphorylation of insulin receptor (IR) and insulin receptor substrate 1 (IRS-1), phosphorylation of protein kinase B and glycogen synthase kinase-3 and insulin induced stimulation of glucose uptake. Isoform 1 and isoform 2 act as a negative regulator of FceRI-mediated signal transduction leading to cytokine production and degranulation, most likely by acting at the level of SYK to affect downstream events such as phosphorylation of SLP76 and LAT and mobilization of Ca(2+). The chain is Receptor-type tyrosine-protein phosphatase epsilon (Ptpre) from Mus musculus (Mouse).